We begin with the raw amino-acid sequence, 260 residues long: Small ribosomal subunit protein uS2 (260 aa).

This sequence belongs to the universal ribosomal protein uS2 family.

The polypeptide is Small ribosomal subunit protein uS2 (Gluconacetobacter diazotrophicus (strain ATCC 49037 / DSM 5601 / CCUG 37298 / CIP 103539 / LMG 7603 / PAl5)).